The primary structure comprises 238 residues: Ribonuclease PH (238 aa).

Residues Arg-86 and 124 to 126 (GTR) contribute to the phosphate site.

This sequence belongs to the RNase PH family. In terms of assembly, homohexameric ring arranged as a trimer of dimers.

The enzyme catalyses tRNA(n+1) + phosphate = tRNA(n) + a ribonucleoside 5'-diphosphate. Phosphorolytic 3'-5' exoribonuclease that plays an important role in tRNA 3'-end maturation. Removes nucleotide residues following the 3'-CCA terminus of tRNAs; can also add nucleotides to the ends of RNA molecules by using nucleoside diphosphates as substrates, but this may not be physiologically important. Probably plays a role in initiation of 16S rRNA degradation (leading to ribosome degradation) during starvation. The sequence is that of Ribonuclease PH from Psychrobacter sp. (strain PRwf-1).